The primary structure comprises 121 residues: Large ribosomal subunit protein uL18 (121 aa).

Belongs to the universal ribosomal protein uL18 family. As to quaternary structure, part of the 50S ribosomal subunit; part of the 5S rRNA/L5/L18/L25 subcomplex. Contacts the 5S and 23S rRNAs.

Functionally, this is one of the proteins that bind and probably mediate the attachment of the 5S RNA into the large ribosomal subunit, where it forms part of the central protuberance. The sequence is that of Large ribosomal subunit protein uL18 from Desulfotalea psychrophila (strain LSv54 / DSM 12343).